Reading from the N-terminus, the 91-residue chain is Non-specific lipid-transfer protein 1 (91 aa).

Disulfide bonds link Cys-3–Cys-50, Cys-13–Cys-27, Cys-28–Cys-73, and Cys-48–Cys-87.

This sequence belongs to the plant LTP family.

Its function is as follows. Plant non-specific lipid-transfer proteins transfer phospholipids as well as galactolipids across membranes. May play a role in wax or cutin deposition in the cell walls of expanding epidermal cells and certain secretory tissues. This Prunus armeniaca (Apricot) protein is Non-specific lipid-transfer protein 1.